The primary structure comprises 359 residues: GTP 3',8-cyclase 1 (359 aa).

One can recognise a Radical SAM core domain in the interval 21-241; sequence RCRRMMGDLR…SLEKRYGRIE (221 aa). Arg-30 contacts GTP. 2 residues coordinate [4Fe-4S] cluster: Cys-37 and Cys-41. Tyr-43 provides a ligand contact to S-adenosyl-L-methionine. Cys-44 contributes to the [4Fe-4S] cluster binding site. Residue Arg-80 coordinates GTP. An S-adenosyl-L-methionine-binding site is contributed by Gly-84. Thr-115 is a binding site for GTP. Ser-139 contacts S-adenosyl-L-methionine. A GTP-binding site is contributed by Lys-176. S-adenosyl-L-methionine is bound at residue Met-210. Cys-273 and Cys-276 together coordinate [4Fe-4S] cluster. Position 278–280 (278–280) interacts with GTP; that stretch reads RSR. Cys-290 lines the [4Fe-4S] cluster pocket.

Belongs to the radical SAM superfamily. MoaA family. In terms of assembly, monomer and homodimer. The cofactor is [4Fe-4S] cluster.

The enzyme catalyses GTP + AH2 + S-adenosyl-L-methionine = (8S)-3',8-cyclo-7,8-dihydroguanosine 5'-triphosphate + 5'-deoxyadenosine + L-methionine + A + H(+). It participates in cofactor biosynthesis; molybdopterin biosynthesis. Catalyzes the cyclization of GTP to (8S)-3',8-cyclo-7,8-dihydroguanosine 5'-triphosphate. In Mycobacterium tuberculosis (strain CDC 1551 / Oshkosh), this protein is GTP 3',8-cyclase 1.